The chain runs to 634 residues: Ras and EF-hand domain-containing protein homolog (634 aa).

EF-hand domains are found at residues 5–33 (DVEN…CPQL) and 33–68 (LDDN…TVQH). Ca(2+)-binding residues include aspartate 46, aspartate 48, serine 50, lysine 52, and glutamate 57. The stretch at 169 to 310 (LSEKKHENER…RADFDQKQDE (142 aa)) forms a coiled coil. Disordered regions lie at residues 216-237 (ERER…EMSE) and 308-328 (QDEL…SESV). Residues 449 to 454 (AVGKSS), 552 to 555 (NKVD), and 585 to 586 (AL) each bind GTP. Positions 632–634 (RGS) are cleaved as a propeptide — removed in mature form.

This sequence belongs to the small GTPase superfamily. Rab family. Homodimer.

The protein localises to the cytoplasm. The protein resides in the perinuclear region. In terms of biological role, binds GTP and GDP. Plays a role in uterine seam cell development. This chain is Ras and EF-hand domain-containing protein homolog, found in Caenorhabditis briggsae.